We begin with the raw amino-acid sequence, 408 residues long: Subtilisin-like protease 6 (408 aa).

Positions 1-20 (MGFITKAIPIVLAALSTVDG) are cleaved as a signal peptide. A propeptide spanning residues 21–123 (AKILEAGPHA…RDTVVKATAI (103 aa)) is cleaved from the precursor. An Inhibitor I9 domain is found at 36-119 (KYIVVMKQDV…DFIERDTVVK (84 aa)). One can recognise a Peptidase S8 domain in the interval 131 to 408 (SWGLARVGSK…GKLIYNGSGK (278 aa)). Catalysis depends on charge relay system residues D163 and H194. Residues N248, N260, and N345 are each glycosylated (N-linked (GlcNAc...) asparagine). S354 serves as the catalytic Charge relay system. An N-linked (GlcNAc...) asparagine glycan is attached at N404.

Belongs to the peptidase S8 family.

Its subcellular location is the secreted. Its function is as follows. Secreted subtilisin-like serine protease with keratinolytic activity that contributes to pathogenicity. The chain is Subtilisin-like protease 6 (SUB6) from Arthroderma gypseum (strain ATCC MYA-4604 / CBS 118893) (Microsporum gypseum).